The primary structure comprises 297 residues: N-acetylneuraminate lyase (297 aa).

Aceneuramate is bound by residues Ser47 and Thr48. Catalysis depends on Tyr137, which acts as the Proton donor. The Schiff-base intermediate with substrate role is filled by Lys165. Aceneuramate contacts are provided by Thr167, Gly189, Asp191, Glu192, and Ser208.

Belongs to the DapA family. NanA subfamily. As to quaternary structure, homotetramer.

The protein resides in the cytoplasm. It carries out the reaction aceneuramate = aldehydo-N-acetyl-D-mannosamine + pyruvate. Its pathway is amino-sugar metabolism; N-acetylneuraminate degradation; D-fructose 6-phosphate from N-acetylneuraminate: step 1/5. In terms of biological role, catalyzes the reversible aldol cleavage of N-acetylneuraminic acid (sialic acid; Neu5Ac) to form pyruvate and N-acetylmannosamine (ManNAc) via a Schiff base intermediate. The chain is N-acetylneuraminate lyase from Escherichia coli O139:H28 (strain E24377A / ETEC).